The primary structure comprises 260 residues: G patch domain-containing protein 11 (260 aa).

Residues methionine 25–methionine 61 are a coiled coil. Positions arginine 33–aspartate 60 are disordered. Residues cysteine 69–leucine 115 form the G-patch domain. Lysine 123 carries the post-translational modification N6-acetyllysine. The tract at residues tryptophan 187–glutamate 212 is disordered. A compositionally biased stretch (acidic residues) spans glutamate 192–lysine 210.

Belongs to the GPATCH11 family.

It localises to the chromosome. The protein localises to the centromere. The protein resides in the kinetochore. The chain is G patch domain-containing protein 11 (GPATCH11) from Bos taurus (Bovine).